We begin with the raw amino-acid sequence, 581 residues long: Trehalase (581 aa).

This sequence belongs to the glycosyl hydrolase 15 family. Monomer.

The enzyme catalyses alpha,alpha-trehalose + H2O = alpha-D-glucose + beta-D-glucose. Its pathway is glycan degradation; trehalose degradation; D-glucose from alpha,alpha-trehalose: step 1/1. Its activity is regulated as follows. Inhibited by validamycin A. Functionally, catalyzes the hydrolysis of alpha,alpha-trehalose into two molecules of D-glucose. The protein is Trehalase of Thermoplasma acidophilum (strain ATCC 25905 / DSM 1728 / JCM 9062 / NBRC 15155 / AMRC-C165).